The primary structure comprises 136 residues: ATP synthase epsilon chain (136 aa).

The protein belongs to the ATPase epsilon chain family. As to quaternary structure, F-type ATPases have 2 components, CF(1) - the catalytic core - and CF(0) - the membrane proton channel. CF(1) has five subunits: alpha(3), beta(3), gamma(1), delta(1), epsilon(1). CF(0) has three main subunits: a, b and c.

The protein resides in the cell membrane. Its function is as follows. Produces ATP from ADP in the presence of a proton gradient across the membrane. This Exiguobacterium sp. (strain ATCC BAA-1283 / AT1b) protein is ATP synthase epsilon chain.